Reading from the N-terminus, the 283-residue chain is Elongation factor Ts (283 aa).

The interval 80 to 83 is involved in Mg(2+) ion dislocation from EF-Tu; sequence TDFV.

This sequence belongs to the EF-Ts family.

It is found in the cytoplasm. In terms of biological role, associates with the EF-Tu.GDP complex and induces the exchange of GDP to GTP. It remains bound to the aminoacyl-tRNA.EF-Tu.GTP complex up to the GTP hydrolysis stage on the ribosome. This is Elongation factor Ts from Salmonella gallinarum (strain 287/91 / NCTC 13346).